The following is a 759-amino-acid chain: Hormone-sensitive lipase (759 aa).

The Involved in the stabilization of the negatively charged intermediate by the formation of the oxyanion hole motif lies at 349–351 (HGG). The active site involves Ser-423. The interval 534–553 (GRKPQKTTSPTAESVRPTES) is disordered. Ser-557 carries the phosphoserine modification. Ser-559 carries the phosphoserine; by AMPK modification. Thr-574 is modified (phosphothreonine). Residues 583–604 (LSNSEPSDSPEMSQSMETLGPS) are disordered. Positions 585 to 604 (NSEPSDSPEMSQSMETLGPS) are enriched in polar residues. Residues Ser-597, Ser-618, Ser-650, and Ser-651 each carry the phosphoserine modification. Residues Asp-694 and His-724 contribute to the active site.

This sequence belongs to the 'GDXG' lipolytic enzyme family. In terms of assembly, monomer and homodimer. Interacts with CAVIN1 in the adipocyte cytoplasm. Interacts with PLIN5. Phosphorylation by AMPK reduces its translocation towards the lipid droplets.

Its subcellular location is the cell membrane. It is found in the membrane. The protein resides in the caveola. The protein localises to the cytoplasm. It localises to the cytosol. Its subcellular location is the lipid droplet. The enzyme catalyses a diacylglycerol + H2O = a monoacylglycerol + a fatty acid + H(+). It catalyses the reaction a triacylglycerol + H2O = a diacylglycerol + a fatty acid + H(+). It carries out the reaction a monoacylglycerol + H2O = glycerol + a fatty acid + H(+). The catalysed reaction is Hydrolyzes glycerol monoesters of long-chain fatty acids.. The enzyme catalyses cholesteryl (9Z-octadecenoate) + H2O = cholesterol + (9Z)-octadecenoate + H(+). It catalyses the reaction all-trans-retinyl hexadecanoate + H2O = all-trans-retinol + hexadecanoate + H(+). It carries out the reaction 1,2-di-(9Z-octadecenoyl)-glycerol + H2O = (9Z-octadecenoyl)-glycerol + (9Z)-octadecenoate + H(+). The catalysed reaction is 2-(5Z,8Z,11Z,14Z-eicosatetraenoyl)-glycerol + H2O = glycerol + (5Z,8Z,11Z,14Z)-eicosatetraenoate + H(+). The enzyme catalyses 1-(9Z-octadecenoyl)-glycerol + H2O = glycerol + (9Z)-octadecenoate + H(+). It catalyses the reaction 2-(9Z-octadecenoyl)-glycerol + H2O = glycerol + (9Z)-octadecenoate + H(+). It carries out the reaction 1-O-hexadecyl-2-acetyl-sn-glycerol + H2O = 1-O-hexadecyl-sn-glycerol + acetate + H(+). The catalysed reaction is 1,2-di-(9Z-octadecenoyl)-sn-glycerol + H2O = (9Z-octadecenoyl)-glycerol + (9Z)-octadecenoate + H(+). The enzyme catalyses 1,3-di-(9Z-octadecenoyl)-glycerol + H2O = 1-(9Z-octadecenoyl)-glycerol + (9Z)-octadecenoate + H(+). It catalyses the reaction 1,2-di-(9Z-octadecenoyl)-glycerol + (9Z)-octadecenoate + H(+) = 1,2,3-tri-(9Z-octadecenoyl)-glycerol + H2O. It carries out the reaction 2,3-di-(9Z)-octadecenoyl-sn-glycerol + H2O = 2-(9Z-octadecenoyl)-glycerol + (9Z)-octadecenoate + H(+). The catalysed reaction is 1,2,3-tri-(9Z-octadecenoyl)-glycerol + H2O = di-(9Z)-octadecenoylglycerol + (9Z)-octadecenoate + H(+). The enzyme catalyses 1,2-di-(9Z-octadecenoyl)-glycerol + H2O = 2-(9Z-octadecenoyl)-glycerol + (9Z)-octadecenoate + H(+). Its pathway is glycerolipid metabolism; triacylglycerol degradation. Functionally, lipase with broad substrate specificity, catalyzing the hydrolysis of triacylglycerols (TAGs), diacylglycerols (DAGs), monoacylglycerols (MAGs), cholesteryl esters and retinyl esters. Shows a preferential hydrolysis of DAGs over TAGs and MAGs and of the fatty acid (FA) esters at the sn-1 and sn-2 positions of the glycerol backbone in TAGs. Preferentially hydrolyzes FA esters at the sn-3 position of the glycerol backbone in DAGs. Catalyzes the hydrolysis of 2-arachidonoylglycerol, an endocannabinoid and of 2-acetyl monoalkylglycerol ether, the penultimate precursor of the pathway for de novo synthesis of platelet-activating factor. In adipose tissue and heart, it primarily hydrolyzes stored triglycerides to free fatty acids, while in steroidogenic tissues, it principally converts cholesteryl esters to free cholesterol for steroid hormone production. In Mus musculus (Mouse), this protein is Hormone-sensitive lipase (Lipe).